Here is a 263-residue protein sequence, read N- to C-terminus: MAAAAARVWCRGLLGAASVGRGAGRPSVLWQHVRRESAAADKRPTVRPRSDVTHKQLSAFGEYVAEILPKYVQQVQVSCLDELEICIHPDGVIPTLTFLRDHTNAQFKSLADLTAVDVPTRQNRFEIVYNLLSLRFNSRIRVKTYADELTPIDSIVSVHIAANWYEREVWDMFGVFFFNHPDLRRILTDYGFEGHPFRKDFPLTGYVELRYDDEVKRVVAEPVELAQEFRKFDLNSPWEAFPAYRQPPESLKLEAGDKKPETK.

A mitochondrion-targeting transit peptide spans 1–35 (MAAAAARVWCRGLLGAASVGRGAGRPSVLWQHVRR).

It belongs to the complex I 30 kDa subunit family. In terms of assembly, core subunit of respiratory chain NADH dehydrogenase (Complex I) which is composed of 45 different subunits. Interacts with NDUFAF3. Interacts with RAB5IF. Found in subcomplexes containing subunits NDUFS2, MT-ND1 and NDUFA13.

It localises to the mitochondrion inner membrane. It catalyses the reaction a ubiquinone + NADH + 5 H(+)(in) = a ubiquinol + NAD(+) + 4 H(+)(out). Its function is as follows. Core subunit of the mitochondrial membrane respiratory chain NADH dehydrogenase (Complex I) which catalyzes electron transfer from NADH through the respiratory chain, using ubiquinone as an electron acceptor. Essential for the catalytic activity and assembly of complex I. The chain is NADH dehydrogenase [ubiquinone] iron-sulfur protein 3, mitochondrial (Ndufs3) from Mus musculus (Mouse).